Here is a 505-residue protein sequence, read N- to C-terminus: Deoxyguanosinetriphosphate triphosphohydrolase (505 aa).

The 208-residue stretch at 66-273 folds into the HD domain; that stretch reads RLTHSMEVQQ…MEAADDISYC (208 aa).

It belongs to the dGTPase family. Type 1 subfamily. As to quaternary structure, homotetramer. Requires Mg(2+) as cofactor.

The enzyme catalyses dGTP + H2O = 2'-deoxyguanosine + triphosphate + H(+). Its function is as follows. dGTPase preferentially hydrolyzes dGTP over the other canonical NTPs. The sequence is that of Deoxyguanosinetriphosphate triphosphohydrolase from Escherichia coli O81 (strain ED1a).